Reading from the N-terminus, the 131-residue chain is MANIAGQYKLDKSENFDQFLDKLGVGFLVKTAAKTVKPTLEVAVDGDTYIFRSLSTFKNTEIKFKLGEEFEEDRADGKRVKTVIVKDGDNKFVQTQYGDKEVKVVREFKGDEVEVTASVDGVTSVRPYKRA.

Residues Arg106 and 126–128 contribute to the (5Z,8Z,11Z,14Z)-eicosatetraenoate site; that span reads RPY. (9Z)-octadecenoate contacts are provided by residues Arg106 and 126 to 128; that span reads RPY.

It belongs to the calycin superfamily. Fatty-acid binding protein (FABP) family.

The protein localises to the cytoplasm. FABPs are thought to play a role in the intracellular transport of long-chain fatty acids and their acyl-CoA esters. The polypeptide is Fatty acid-binding protein (Lepidoglyphus destructor (Storage mite)).